Here is a 658-residue protein sequence, read N- to C-terminus: Sulfate transporter 3.1 (658 aa).

Residues 1–85 lie on the Cytoplasmic side of the membrane; that stretch reads MGTEDYTFPQ…RYNLKFFKSD (85 aa). The helical transmembrane segment at 86–106 threads the bilayer; it reads LIAGITIASLAIPQGISYAKL. The Extracellular portion of the chain corresponds to 107 to 108; the sequence is AN. The helical transmembrane segment at 109 to 129 threads the bilayer; it reads LPPILGLYSSFVPPLVYAVLG. Topologically, residues 130–133 are cytoplasmic; sequence SSRD. Residues 134–154 traverse the membrane as a helical segment; it reads LAVGTVAVASLLTGAMLSKEV. At 155–163 the chain is on the extracellular side; the sequence is DAEKDPKLY. A helical transmembrane segment spans residues 164–184; the sequence is LHLAFTATFFAGVLEASLGIF. Position 185 (Arg185) is a topological domain, cytoplasmic. The helical transmembrane segment at 186 to 206 threads the bilayer; sequence LGFIVDFLSHATIVGFMGGAA. The Extracellular portion of the chain corresponds to 207 to 245; the sequence is TVVSLQQLKGIFGLKHFTDSTDVISVMRSVFSQTHEWRW. A helical membrane pass occupies residues 246–266; that stretch reads ESGVLGCGFLFFLLSTRYFSI. At 267–271 the chain is on the cytoplasmic side; sequence KKPKF. The helical transmembrane segment at 272 to 292 threads the bilayer; that stretch reads FWVAAMAPLTSVILGSLLVYF. Residues 293-332 lie on the Extracellular side of the membrane; the sequence is THAERHGVQVIGDLKKGLNPLSGSDLIFTSPYMSTAVKTG. A helical membrane pass occupies residues 333-353; the sequence is LITGIIALAEGVAVGRSFAMF. Residues 354–363 lie on the Cytoplasmic side of the membrane; sequence KNYNIDGNKE. The chain crosses the membrane as a helical span at residues 364 to 384; the sequence is MIAFGMMNIVGSFTSCYLTTG. Topologically, residues 385–398 are extracellular; sequence PFSRSAVNYNAGCK. The chain crosses the membrane as a helical span at residues 399–419; that stretch reads TAMSNIVMAIAVMFTLLFLTP. Over 420 to 425 the chain is Cytoplasmic; it reads LFHYTP. Residues 426–446 traverse the membrane as a helical segment; sequence LVVLSAIIISAMLGLIDYQAA. Over 447 to 464 the chain is Extracellular; the sequence is IHLWKVDKFDFLVCMSAY. The helical transmembrane segment at 465–485 threads the bilayer; it reads VGVVFGSVEIGLVVAVAISIA. The Cytoplasmic segment spans residues 486 to 658; it reads RLLLFVSRPK…ASKNEPWNNV (173 aa). The region spanning 513 to 637 is the STAS domain; sequence QYPSSRTVPG…LTVGEAVEAC (125 aa).

It belongs to the SLC26A/SulP transporter (TC 2.A.53) family. In terms of tissue distribution, expressed only in leaves.

The protein localises to the membrane. Functionally, h(+)/sulfate cotransporter that may play a role in the regulation of sulfate assimilation. In Arabidopsis thaliana (Mouse-ear cress), this protein is Sulfate transporter 3.1 (SULTR3;1).